Here is a 354-residue protein sequence, read N- to C-terminus: UDP-N-acetylglucosamine--N-acetylmuramyl-(pentapeptide) pyrophosphoryl-undecaprenol N-acetylglucosamine transferase (354 aa).

Residues 15-17 (TGG), Asn-127, Arg-163, Ser-191, Ile-244, 263-268 (ALTVSE), and Gln-288 each bind UDP-N-acetyl-alpha-D-glucosamine.

Belongs to the glycosyltransferase 28 family. MurG subfamily.

It localises to the cell inner membrane. The catalysed reaction is di-trans,octa-cis-undecaprenyl diphospho-N-acetyl-alpha-D-muramoyl-L-alanyl-D-glutamyl-meso-2,6-diaminopimeloyl-D-alanyl-D-alanine + UDP-N-acetyl-alpha-D-glucosamine = di-trans,octa-cis-undecaprenyl diphospho-[N-acetyl-alpha-D-glucosaminyl-(1-&gt;4)]-N-acetyl-alpha-D-muramoyl-L-alanyl-D-glutamyl-meso-2,6-diaminopimeloyl-D-alanyl-D-alanine + UDP + H(+). It participates in cell wall biogenesis; peptidoglycan biosynthesis. Its function is as follows. Cell wall formation. Catalyzes the transfer of a GlcNAc subunit on undecaprenyl-pyrophosphoryl-MurNAc-pentapeptide (lipid intermediate I) to form undecaprenyl-pyrophosphoryl-MurNAc-(pentapeptide)GlcNAc (lipid intermediate II). This is UDP-N-acetylglucosamine--N-acetylmuramyl-(pentapeptide) pyrophosphoryl-undecaprenol N-acetylglucosamine transferase from Aliivibrio salmonicida (strain LFI1238) (Vibrio salmonicida (strain LFI1238)).